The chain runs to 133 residues: Antifungal protein ginkbilobin-like protein 1 (133 aa).

The first 24 residues, 1 to 24 (MSMGSFGFALAVMVLAVLVASAAG), serve as a signal peptide directing secretion. A Gnk2-homologous domain is found at 28-133 (TNFVSSACNT…CFIRYEQYSI (106 aa)). Cystine bridges form between C35–C111, C87–C96, and C99–C124. N36 is an alpha-D-mannopyranose binding site. The alpha-D-mannopyranose site is built by R118 and E129.

Exerts antifungal activity through its carbohydrate-binding specificity. The protein is Antifungal protein ginkbilobin-like protein 1 of Picea sitchensis (Sitka spruce).